We begin with the raw amino-acid sequence, 571 residues long: CDT1-like protein a, chloroplastic (571 aa).

A chloroplast-targeting transit peptide spans 1–79; that stretch reads MSTPGSSRSI…GSRRRSEDPV (79 aa). Disordered stretches follow at residues 1–110 and 288–315; these read MSTP…EKEK and TTSS…TPAK. Residues 22-38 are compositionally biased toward polar residues; it reads SPSSKSQTGNPNPSSVA. Residues 81–96 show a composition bias toward low complexity; the sequence is SSAKSRLFFDSSSSSP. The span at 288-302 shows a compositional bias: polar residues; that stretch reads TTSSLAKPTSSQINI. The span at 303-315 shows a compositional bias: low complexity; that stretch reads APTPTKPTSTPAK.

The protein belongs to the Cdt1 family. In terms of assembly, binds to ARC6. Phosphorylated by cyclin D- and cyclin A-containing CDKA-1, and thus targeted to proteasome-mediated proteolysis. Expressed in proliferating (e.g. shoot and root apical meristems, organ primordia) and endoreplicating cells (e.g. guard cells and stomatal lineage, developing trichomes).

Its subcellular location is the plastid. The protein resides in the chloroplast. Functionally, member of the pre-replication complex. Component of the plastid division machinery. Promotes polyloidization and regulates endoreduplication. Involved in the coordination of cell and plastid division. In Arabidopsis thaliana (Mouse-ear cress), this protein is CDT1-like protein a, chloroplastic (CDT1A).